The primary structure comprises 213 residues: Major fimbrial subunit (213 aa).

Residues 1–20 (MKKTLLGSLILLAFAGNVQA) form the signal peptide. Cys41 and Cys81 are joined by a disulfide.

The protein belongs to the fimbrial protein family.

Its subcellular location is the fimbrium. In terms of biological role, mediates adherence to oropharyngeal epithelial cells. Helps the airway colonization process. The polypeptide is Major fimbrial subunit (hifA) (Haemophilus influenzae).